The chain runs to 567 residues: uncharacterized protein (567 aa).

The next 6 membrane-spanning stretches (helical) occupy residues 20 to 40 (FTILAFFYISSIFFLLCSGVL), 69 to 89 (SLETAWYLISAVAVFIASVFI), 95 to 115 (AYLTLLAITWIVLTITDVALI), 126 to 146 (ILLNILYNLFGAILLSLFMCL), 168 to 188 (IPLVSAIIIAILITAVIYLLF), and 528 to 548 (IFGSSIMDILKYIFGLGLLAI).

It localises to the cell membrane. This is an uncharacterized protein from Escherichia coli (strain K12).